A 215-amino-acid polypeptide reads, in one-letter code: Probable phosphoglycerate mutase GpmB (215 aa).

Residues 8–15, 21–22, R58, K60, 82–85, 104–105, and 151–152 contribute to the substrate site; these read RHGETQWN, QG, ELDM, RR, and GI. H9 acts as the Tele-phosphohistidine intermediate in catalysis. E82 (proton donor/acceptor) is an active-site residue.

This sequence belongs to the phosphoglycerate mutase family. GpmB subfamily.

The catalysed reaction is (2R)-2-phosphoglycerate = (2R)-3-phosphoglycerate. The protein operates within carbohydrate degradation; glycolysis; pyruvate from D-glyceraldehyde 3-phosphate: step 3/5. The protein is Probable phosphoglycerate mutase GpmB of Salmonella paratyphi A (strain AKU_12601).